Reading from the N-terminus, the 113-residue chain is Ribonuclease P protein component (113 aa).

The span at 1–10 (MLPTRHRMRT) shows a compositional bias: basic residues. A disordered region spans residues 1-23 (MLPTRHRMRTSAHFSTTVRSGAR).

This sequence belongs to the RnpA family. As to quaternary structure, consists of a catalytic RNA component (M1 or rnpB) and a protein subunit.

It catalyses the reaction Endonucleolytic cleavage of RNA, removing 5'-extranucleotides from tRNA precursor.. Functionally, RNaseP catalyzes the removal of the 5'-leader sequence from pre-tRNA to produce the mature 5'-terminus. It can also cleave other RNA substrates such as 4.5S RNA. The protein component plays an auxiliary but essential role in vivo by binding to the 5'-leader sequence and broadening the substrate specificity of the ribozyme. The protein is Ribonuclease P protein component of Kocuria rhizophila (strain ATCC 9341 / DSM 348 / NBRC 103217 / DC2201).